Reading from the N-terminus, the 1499-residue chain is Phospholipid-transporting ATPase VA (1499 aa).

Residues 1-53 (MEREPAGTEEPGPPGRRRRREGRTRTVRSNLLPPPGAEDPAAGAAKGERRRRR) form a disordered region. At 1–86 (MEREPAGTEE…KNLFEQFHRP (86 aa)) the chain is on the cytoplasmic side. Over residues 15–26 (GRRRRREGRTRT) the composition is skewed to basic residues. A helical membrane pass occupies residues 87–106 (ANVYFVFIALLNFVPAVNAF). Residues 107–110 (QPGL) lie on the Exoplasmic loop side of the membrane. Residues 111 to 128 (ALAPVLFILAITAFRDLW) form a helical membrane-spanning segment. The Cytoplasmic segment spans residues 129 to 309 (EDYSRHRSDH…SKLERQMNCD (181 aa)). Residues 310-332 (VLWCVLLLVCMSLFSAVGHGLWI) form a helical membrane-spanning segment. Topologically, residues 333–362 (WRYQEKKSLFYVPKSDGSSLSPVTAAVYSF) are exoplasmic loop. The chain crosses the membrane as a helical span at residues 363 to 384 (LTMIIVLQVLIPISLYVSIEIV). The Cytoplasmic portion of the chain corresponds to 385 to 1087 (KACQVYFINQ…GHWCYSRLAN (703 aa)). Residue Asp427 is the 4-aspartylphosphate intermediate of the active site. Residues Asp427, Lys428, and Thr429 each coordinate ATP. Asp427 lines the Mg(2+) pocket. Thr429 lines the Mg(2+) pocket. Residues 464–531 (ADSEEEEVVP…AFSSPMEKDI (68 aa)) form a disordered region. Ser466 carries the phosphoserine modification. A compositionally biased stretch (polar residues) spans 477–499 (SVSQRGSIGSHQSVRVVHRTQST). Positions 700, 742, 766, 809, 889, 890, 891, 1005, and 1011 each coordinate ATP. Residue Asp1031 coordinates Mg(2+). The ATP site is built by Asn1034 and Asp1035. Mg(2+) is bound at residue Asp1035. A helical membrane pass occupies residues 1088–1108 (MVLYFFYKNTMFVGLLFWFQF). Residues 1109–1119 (FCGFSASTMID) lie on the Exoplasmic loop side of the membrane. A helical transmembrane segment spans residues 1120-1140 (QWYLIFFNLLFSSLPPLVTGV). The Cytoplasmic portion of the chain corresponds to 1141 to 1170 (LDRDVPANVLLTNPQLYKSGQNMEEYRPRT). The helical transmembrane segment at 1171–1192 (FWFNMADAAFQSLVCFSIPYLA) threads the bilayer. Over 1193 to 1199 (YYDSNVD) the chain is Exoplasmic loop. A helical membrane pass occupies residues 1200-1222 (LFTWGTPIVTIALLTFLLHLGIE). At 1223–1228 (TKTWTW) the chain is on the cytoplasmic side. A helical transmembrane segment spans residues 1229–1249 (LNWITCGFSVLLFFTVALIYN). Residues 1250 to 1267 (ASCATCYPPSNPYWTMQA) are Exoplasmic loop-facing. Residues 1268-1292 (LLGDPVFYLTCLMTPVAALLPRLFF) form a helical membrane-spanning segment. The Cytoplasmic portion of the chain corresponds to 1293–1499 (RSLQGRVFPT…LIGASSRRSQ (207 aa)). 2 disordered regions span residues 1311 to 1356 (TRKS…PSWH) and 1464 to 1499 (DGQAGRGLPVQPHSGRSGLQGPDHRLLIGASSRRSQ). Positions 1330-1340 (LPKDSGTEHSS) are enriched in basic and acidic residues. Positions 1341–1356 (GRTVKTSVPLSQPSWH) are enriched in polar residues.

The protein belongs to the cation transport ATPase (P-type) (TC 3.A.3) family. Type IV subfamily. As to quaternary structure, component of a P4-ATPase flippase complex which consists of a catalytic alpha subunit ATP10A and an accessory beta subunit TMEM30A. Mg(2+) is required as a cofactor. Autophosphorylated at the conserved aspartate of the P-type ATPase signature sequence. As to expression, widely expressed, with highest levels in kidney, followed by lung, brain, prostate, testis, ovary and small intestine.

It is found in the cell membrane. It localises to the endoplasmic reticulum membrane. The enzyme catalyses ATP + H2O + phospholipidSide 1 = ADP + phosphate + phospholipidSide 2.. The catalysed reaction is a 1,2-diacyl-sn-glycero-3-phosphocholine(out) + ATP + H2O = a 1,2-diacyl-sn-glycero-3-phosphocholine(in) + ADP + phosphate + H(+). It catalyses the reaction a beta-D-glucosyl-(1&lt;-&gt;1')-N-acylsphing-4-enine(out) + ATP + H2O = a beta-D-glucosyl-(1&lt;-&gt;1')-N-acylsphing-4-enine(in) + ADP + phosphate + H(+). Its activity is regulated as follows. Inhibited under hypotonic conditions. Catalytic component of P4-ATPase flippase complex, which catalyzes the hydrolysis of ATP coupled to the transport of phosphatidylcholine (PC) from the outer to the inner leaflet of the plasma membrane. Initiates inward plasma membrane bending and recruitment of Bin/amphiphysin/Rvs (BAR) domain-containing proteins involved in membrane tubulation and cell trafficking. Facilitates ITGB1/beta1 integrin endocytosis, delaying cell adhesion and cell spreading on extracellular matrix. Has low flippase activity toward glucosylceramide (GlcCer). The polypeptide is Phospholipid-transporting ATPase VA (Homo sapiens (Human)).